The sequence spans 34 residues: Protamine-Y1/Y2 (34 aa).

The tract at residues 1–34 (PRRRRQASRPVRRRRRYRRSTAARRRRRVVRRRR) is disordered.

As to expression, testis.

The protein localises to the nucleus. The protein resides in the chromosome. Protamines substitute for histones in the chromatin of sperm during the haploid phase of spermatogenesis. They compact sperm DNA into a highly condensed, stable and inactive complex. The polypeptide is Protamine-Y1/Y2 (Thunnus thynnus (Atlantic bluefin tuna)).